The sequence spans 306 residues: Protein pxr1 (306 aa).

The segment covering 1 to 11 (MGLAAPRKRTK) has biased composition (basic residues). 2 disordered regions span residues 1 to 27 (MGLA…STSG) and 148 to 241 (AQKE…SDIP). A compositionally biased stretch (polar residues) spans 15–27 (DPNNTNWSRSTSG). The region spanning 25 to 79 (TSGYGHKIMSSQGWTPGSFLGARNAAHADMFTAASASHIRVVVKDDTLGLGARSK) is the G-patch domain. Residues 182-191 (NTLKALREEQ) are compositionally biased toward basic and acidic residues. Residues 219–228 (KKERKTKKRK) show a composition bias toward basic residues.

The protein belongs to the PINX1 family.

Its subcellular location is the nucleus. The protein localises to the nucleolus. Its function is as follows. Involved in rRNA-processing at A0, A1 and A2 sites and negatively regulates telomerase. The chain is Protein pxr1 (pxr1) from Aspergillus oryzae (strain ATCC 42149 / RIB 40) (Yellow koji mold).